The following is a 354-amino-acid chain: S-adenosylmethionine:tRNA ribosyltransferase-isomerase (354 aa).

This sequence belongs to the QueA family. As to quaternary structure, monomer.

The protein resides in the cytoplasm. It catalyses the reaction 7-aminomethyl-7-carbaguanosine(34) in tRNA + S-adenosyl-L-methionine = epoxyqueuosine(34) in tRNA + adenine + L-methionine + 2 H(+). It participates in tRNA modification; tRNA-queuosine biosynthesis. Functionally, transfers and isomerizes the ribose moiety from AdoMet to the 7-aminomethyl group of 7-deazaguanine (preQ1-tRNA) to give epoxyqueuosine (oQ-tRNA). The protein is S-adenosylmethionine:tRNA ribosyltransferase-isomerase of Salmonella gallinarum (strain 287/91 / NCTC 13346).